We begin with the raw amino-acid sequence, 178 residues long: Protein FAM89A (178 aa).

It belongs to the FAM89 family.

The protein is Protein FAM89A (FAM89A) of Bos taurus (Bovine).